A 250-amino-acid chain; its full sequence is Probable transcriptional regulatory protein Cag_0165 (250 aa).

This sequence belongs to the TACO1 family.

It is found in the cytoplasm. In Chlorobium chlorochromatii (strain CaD3), this protein is Probable transcriptional regulatory protein Cag_0165.